Reading from the N-terminus, the 2364-residue chain is Cytotoxin-L (2364 aa).

Positions 1–91 (MNLVNKAQLQ…EVLELKNNSL (91 aa)) are four-helical bundle. In terms of domain architecture, GT44 spans 96-468 (KNLHFIWIGG…APDVRSTINL (373 aa)). Residues 96 to 468 (KNLHFIWIGG…APDVRSTINL (373 aa)) are glucosyltransferase region. Residues 101 to 103 (IWI), Asn-139, 265 to 270 (LAAASD), and 286 to 288 (DVD) each bind UDP-alpha-D-glucose. Mg(2+) is bound by residues Asp-288, Glu-515, and Ser-518. A UDP-alpha-D-glucose-binding site is contributed by 518–520 (SLW). Residues 544 to 799 (GEDDNLDFAQ…KSKYLHELST (256 aa)) are autoprocessing region. Zn(2+)-binding residues include Glu-545 and Asp-546. Positions 567–774 (LSSMKTRNKE…EESIIKDISS (208 aa)) constitute a Peptidase C80 domain. Residues Tyr-577, Lys-600, and Lys-647 each coordinate 1D-myo-inositol hexakisphosphate. His-653 contacts Zn(2+). The For protease activity role is filled by His-653. The Nucleophile; for protease activity role is filled by Cys-698. Zn(2+) is bound at residue His-757. Residues Lys-764, Lys-775, and Lys-792 each coordinate 1D-myo-inositol hexakisphosphate. A translocation region region spans residues 800-1500 (LLQEIRNNAN…ESIIRNIYMP (701 aa)). 5 interaction with host SEMA6A and SEMA6B regions span residues 1433–1438 (CMKLIE), 1466–1471 (DNETKY), 1484–1495 (FTAEFSNESIIR), 1504–1511 (NLFIYSSK), and 1596–1601 (YNNLDP). 20 Cell wall-binding repeats span residues 1813–1832 (EFGL…FGNM), 1833–1852 (VSGL…PKNN), 1854–1873 (ITGF…TKSG), 1876–1895 (SIGE…QGIL), 1926–1945 (FIGK…NYRA), 1946–1965 (AVEW…KTGE), 1967–1986 (LKGL…NGIM), 1987–2006 (QTGF…DGVM), 2007–2026 (QVGY…NGER), 2057–2076 (YNGI…SNTA), 2077–2097 (VVGW…NRAE), 2099–2118 (CIGL…NGIR), 2119–2138 (QLGF…SGKI), 2139–2158 (ELGY…SGLV), 2209–2224 (ETGW…YFDP), 2227–2249 (KKAY…NGIM), 2250–2269 (RTGL…DGKM), 2270–2289 (QFGY…DGKM), 2320–2339 (YTGW…EYIA), and 2340–2359 (ATGS…DTAE). The receptor-binding (CROPS) region stretch occupies residues 1835–2364 (GLIYINDSLY…PDTAELVVSE (530 aa)).

Belongs to the clostridial glucosylating toxin (LCGT) family. As to quaternary structure, homomultimer; forms an inactive homomultimer at pH 8, which dissociates at pH 4, leading to cytotoxicity. Interacts with host SEMA6A; interaction promotes toxin entry into host cell. Interacts with host SEMA6B; interaction promotes toxin entry into host cell. Zn(2+) serves as cofactor. The cofactor is Mn(2+). It depends on Mg(2+) as a cofactor. Post-translationally, undergoes autocatalytic cleavage to release the N-terminal part (Glucosyltransferase TcsL), which constitutes the active part of the toxin, in the host cytosol. 1D-myo-inositol hexakisphosphate-binding (InsP6) activates the peptidase C80 domain and promotes autoprocessing.

It localises to the secreted. The protein localises to the host endosome membrane. The protein resides in the host cytoplasm. Its subcellular location is the host cytosol. It is found in the host cell membrane. It catalyses the reaction L-threonyl-[protein] + UDP-alpha-D-glucose = 3-O-(alpha-D-glucosyl)-L-threonyl-[protein] + UDP + H(+). With respect to regulation, protease activity is activated upon binding to 1D-myo-inositol hexakisphosphate (InsP6), which induces conformational reorganization. Its function is as follows. Precursor of a cytotoxin that targets the vascular endothelium, inducing an anti-inflammatory effect and resulting in lethal toxic shock syndrome. TcsL constitutes the main toxin that mediates the pathology of P.sordellii infection, an anaerobic Gram-positive bacterium found in soil and in the gastrointestinal and vaginal tracts of animals and humans; although the majority of carriers are asymptomatic, pathogenic P.sordellii infections arise rapidly and are highly lethal. This form constitutes the precursor of the toxin: it enters into host cells and mediates autoprocessing to release the active toxin (Glucosyltransferase TcsL) into the host cytosol. Targets vascular endothelium by binding to the semaphorin proteins SEMA6A and SEMA6B, and enters host cells via clathrin-mediated endocytosis. Once entered into host cells, acidification in the endosome promotes the membrane insertion of the translocation region and formation of a pore, leading to translocation of the GT44 and peptidase C80 domains across the endosomal membrane. This activates the peptidase C80 domain and autocatalytic processing, releasing the N-terminal part (Glucosyltransferase TcsL), which constitutes the active part of the toxin, in the cytosol. Active form of the toxin, which is released into the host cytosol following autoprocessing and inactivates small GTPases. Acts by mediating monoglucosylation of small GTPases of the Ras (H-Ras/HRAS, K-Ras/KRAS, N-Ras/NRAS and Ral/RALA) family in host cells at the conserved threonine residue located in the switch I region ('Thr-37/35'), using UDP-alpha-D-glucose as the sugar donor. Also able to catalyze monoglucosylation of some members of the Rho family (Rac1 and Rap2A), but with less efficiency than with Ras proteins. Monoglucosylation of host small GTPases completely prevents the recognition of the downstream effector, blocking the GTPases in their inactive form and leading to apoptosis. Induces an anti-inflammatory effect, mainly by inactivating Ras proteins which results in blockage of the cell cycle and killing of immune cells. The absence or moderate local inflammatory response allows C.sordellii spreading in deep tissues, production of toxin which is released in the general circulation and causes a toxic shock syndrome. This chain is Cytotoxin-L, found in Paraclostridium sordellii (Clostridium sordellii).